Consider the following 248-residue polypeptide: tRNA uridine(34) hydroxylase (248 aa).

One can recognise a Rhodanese domain in the interval 127–221 (RGRPLVLLDT…YFEEVGGEGY (95 aa)). C181 (cysteine persulfide intermediate) is an active-site residue.

This sequence belongs to the TrhO family.

It carries out the reaction uridine(34) in tRNA + AH2 + O2 = 5-hydroxyuridine(34) in tRNA + A + H2O. Catalyzes oxygen-dependent 5-hydroxyuridine (ho5U) modification at position 34 in tRNAs. In Xanthomonas euvesicatoria pv. vesicatoria (strain 85-10) (Xanthomonas campestris pv. vesicatoria), this protein is tRNA uridine(34) hydroxylase.